Reading from the N-terminus, the 201-residue chain is MLLTRKNVAVRPARAARRDVRAMSLLGNLFGGGSKPTSSTSNFHQLSALDIDKKNVDFKSLNNRVVLVVNVASKUGLTAANYKEFATLLGKYPATDLTIVAFPCNQFGGQEPGTNAEIKAFASARGFSGAGALLMDKVDVNGANASPVYNFLKVAAGDTSDIGWNFGKFLVRPDGTVFGRYAPTTGPLSLEKYIVELINSR.

Residues 1–27 (MLLTRKNVAVRPARAARRDVRAMSLLG) constitute a mitochondrion transit peptide. The active site involves selenocysteine 75. A non-standard amino acid (selenocysteine) is located at residue selenocysteine 75.

The protein localises to the mitochondrion. The enzyme catalyses 2 glutathione + H2O2 = glutathione disulfide + 2 H2O. Its function is as follows. May constitute a glutathione peroxidase-like protective system against oxidative stresses. Hydrogen peroxide, tert-butyl hydroperoxide and cumene, but not phosphatidylcholine hydroperoxide, can act as acceptors. The polypeptide is Glutathione peroxidase 1, mitochondrial (Chlamydomonas reinhardtii (Chlamydomonas smithii)).